The sequence spans 282 residues: 2-dehydro-3-deoxyphosphooctonate aldolase (282 aa).

The protein belongs to the KdsA family.

It localises to the cytoplasm. It carries out the reaction D-arabinose 5-phosphate + phosphoenolpyruvate + H2O = 3-deoxy-alpha-D-manno-2-octulosonate-8-phosphate + phosphate. The protein operates within carbohydrate biosynthesis; 3-deoxy-D-manno-octulosonate biosynthesis; 3-deoxy-D-manno-octulosonate from D-ribulose 5-phosphate: step 2/3. Its pathway is bacterial outer membrane biogenesis; lipopolysaccharide biosynthesis. The chain is 2-dehydro-3-deoxyphosphooctonate aldolase from Shewanella sp. (strain ANA-3).